Here is a 100-residue protein sequence, read N- to C-terminus: NADH-quinone oxidoreductase subunit K (100 aa).

The next 3 membrane-spanning stretches (helical) occupy residues 4-24 (LSHGLILAFFLFSLGFVSLVM), 28-48 (ILFMLISLEIMINSAALALVV), and 60-80 (IMYILILTLGASESSIGLALL).

The protein belongs to the complex I subunit 4L family. As to quaternary structure, NDH-1 is composed of 13 different subunits. Subunits NuoA, H, J, K, L, M, N constitute the membrane sector of the complex.

Its subcellular location is the cell membrane. The enzyme catalyses a quinone + NADH + 5 H(+)(in) = a quinol + NAD(+) + 4 H(+)(out). Its function is as follows. NDH-1 shuttles electrons from NADH, via FMN and iron-sulfur (Fe-S) centers, to quinones in the respiratory chain. The immediate electron acceptor for the enzyme in this species is believed to be ubiquinone. Couples the redox reaction to proton translocation (for every two electrons transferred, four hydrogen ions are translocated across the cytoplasmic membrane), and thus conserves the redox energy in a proton gradient. This is NADH-quinone oxidoreductase subunit K from Buchnera aphidicola subsp. Baizongia pistaciae (strain Bp).